A 684-amino-acid polypeptide reads, in one-letter code: Acetyl-coenzyme A synthetase 2 (684 aa).

Residues 207–210 and Thr326 each bind CoA; that span reads RGGK. Residues 402–404, 426–431, Asp517, and Arg532 each bind ATP; these read GEP and DTMWQT. Ser540 is a binding site for CoA. Arg543 lines the ATP pocket. Arg613 lines the CoA pocket.

Belongs to the ATP-dependent AMP-binding enzyme family.

It carries out the reaction acetate + ATP + CoA = acetyl-CoA + AMP + diphosphate. The sequence is that of Acetyl-coenzyme A synthetase 2 (ACS2) from Kluyveromyces lactis (strain ATCC 8585 / CBS 2359 / DSM 70799 / NBRC 1267 / NRRL Y-1140 / WM37) (Yeast).